Here is a 599-residue protein sequence, read N- to C-terminus: Peptidyl-Asp metalloendopeptidase (599 aa).

An N-terminal signal peptide occupies residues 1-20; sequence MKKSLLCSTLALAVASAAQA. His-164 lines the Zn(2+) pocket. Glu-165 is a catalytic residue. Residues His-168 and His-174 each coordinate Zn(2+). Residues 265–285 are disordered; that stretch reads PTKVPGTVNPGSGGDTPTPPD. The 126-residue stretch at 458 to 583 folds into the CBM-cenC domain; the sequence is YDFESGIGGW…KRAELMILSG (126 aa).

It belongs to the peptidase M72 family. As to quaternary structure, interacts with BamI, the product of its coregulated adjacent gene, which inhibits its protease activity. The cofactor is Zn(2+). Post-translationally, made as a membrane-associated pre-pro-protein, which is exported to the periplasm with removal of the signal peptide, leading to a protein with a molecular mass of 65 kDa, that likely contains the metzincin domain plus tandem carbohydrate-binding domains. Undergoes processing during export to the extracellular milieu, probably by autocatalysis, yielding a (mature length) 25 kDa protein that most likely corresponds to the metzincin domain only.

The protein localises to the secreted. The catalysed reaction is Cleavage of Xaa-|-Asp, Xaa-|-Glu and Xaa-|-cysteic acid bonds.. With respect to regulation, is inhibited by BamI, the product of its coregulated adjacent gene. Metalloprotease with endopeptidase activity. Specifically cleaves on the N-terminal side of aspartyl, glutamyl and cysteic acid residues. Mep72 appears to be a secreted biofilm-specific regulator that affects the processing of a very specific subset of virulence factors exported by the type III secretion machinery as well as flagellar proteins. Binds directly to ExoS and PcrV and affects the processing of these proteins in the biofilm secretome, but contrary to expectation, Mep72 seems to protect these targets against proteolytic processing/degradation. This Pseudomonas aeruginosa (strain ATCC 15692 / DSM 22644 / CIP 104116 / JCM 14847 / LMG 12228 / 1C / PRS 101 / PAO1) protein is Peptidyl-Asp metalloendopeptidase.